The primary structure comprises 242 residues: Orotidine 5'-phosphate decarboxylase (242 aa).

Substrate contacts are provided by residues Asp-21, Lys-43, 71 to 80 (DLKFFDVPET), Thr-124, Arg-185, Gln-195, Gly-215, and Arg-216. Lys-73 acts as the Proton donor in catalysis.

This sequence belongs to the OMP decarboxylase family. Type 1 subfamily. In terms of assembly, homodimer.

It catalyses the reaction orotidine 5'-phosphate + H(+) = UMP + CO2. It participates in pyrimidine metabolism; UMP biosynthesis via de novo pathway; UMP from orotate: step 2/2. Its function is as follows. Catalyzes the decarboxylation of orotidine 5'-monophosphate (OMP) to uridine 5'-monophosphate (UMP). In Methylococcus capsulatus (strain ATCC 33009 / NCIMB 11132 / Bath), this protein is Orotidine 5'-phosphate decarboxylase.